The chain runs to 356 residues: Probable L-asparaginase 4 (356 aa).

The N-terminal stretch at 1-22 (MWGFIVTCGIFLVLLCQLRLLS) is a signal peptide. The Asparaginase/glutaminase domain maps to 36-356 (PNVTVFAMGG…RDIEGLFSIK (321 aa)). The N-linked (GlcNAc...) asparagine glycan is linked to Asn37. Thr46 serves as the catalytic O-isoaspartyl threonine intermediate. Asn52 carries N-linked (GlcNAc...) asparagine glycosylation. Substrate contacts are provided by residues Ser93 and 126–127 (TD). Asn176 carries N-linked (GlcNAc...) asparagine glycosylation.

The protein belongs to the asparaginase 1 family.

The protein resides in the secreted. Its subcellular location is the cell wall. The catalysed reaction is L-asparagine + H2O = L-aspartate + NH4(+). The polypeptide is Probable L-asparaginase 4 (Schizosaccharomyces pombe (strain 972 / ATCC 24843) (Fission yeast)).